The sequence spans 110 residues: Phosphoribosyl-AMP cyclohydrolase (110 aa).

A Mg(2+)-binding site is contributed by aspartate 80. Cysteine 81 contacts Zn(2+). Mg(2+) is bound by residues aspartate 82 and aspartate 84. 2 residues coordinate Zn(2+): cysteine 97 and cysteine 104.

Belongs to the PRA-CH family. Homodimer. The cofactor is Mg(2+). It depends on Zn(2+) as a cofactor.

Its subcellular location is the cytoplasm. The enzyme catalyses 1-(5-phospho-beta-D-ribosyl)-5'-AMP + H2O = 1-(5-phospho-beta-D-ribosyl)-5-[(5-phospho-beta-D-ribosylamino)methylideneamino]imidazole-4-carboxamide. The protein operates within amino-acid biosynthesis; L-histidine biosynthesis; L-histidine from 5-phospho-alpha-D-ribose 1-diphosphate: step 3/9. Its function is as follows. Catalyzes the hydrolysis of the adenine ring of phosphoribosyl-AMP. This Clostridium botulinum (strain ATCC 19397 / Type A) protein is Phosphoribosyl-AMP cyclohydrolase.